Here is a 92-residue protein sequence, read N- to C-terminus: Small ribosomal subunit protein uS19 (92 aa).

The protein belongs to the universal ribosomal protein uS19 family.

Its function is as follows. Protein S19 forms a complex with S13 that binds strongly to the 16S ribosomal RNA. This Oceanobacillus iheyensis (strain DSM 14371 / CIP 107618 / JCM 11309 / KCTC 3954 / HTE831) protein is Small ribosomal subunit protein uS19.